Consider the following 375-residue polypeptide: Protein arginine N-methyltransferase 6 (375 aa).

The disordered stretch occupies residues 1 to 38 (MSQPKKRKLESGGGGEGGEGTEEEDGAEREAALERPRR). Phosphothreonine is present on T21. A compositionally biased stretch (basic and acidic residues) spans 28-38 (EREAALERPRR). R29, R35, and R37 each carry asymmetric dimethylarginine; by autocatalysis. The 331-residue stretch at 44-374 (DQLYYECYSD…EEKTKDFAME (331 aa)) folds into the SAM-dependent MTase PRMT-type domain. S-adenosyl-L-methionine-binding residues include H57, R66, G90, E112, and E141. Residues E155 and E164 contribute to the active site.

Belongs to the class I-like SAM-binding methyltransferase superfamily. Protein arginine N-methyltransferase family. PRMT6 subfamily. Interacts with EPB41L3 and NCOA1. As to quaternary structure, (Microbial infection) Interacts with (and methylates) HIV-1 Tat, Rev and Nucleocapsid protein p7 (NC). In terms of assembly, (Microbial infection) Interacts with human cytomegalovirus protein UL69. Post-translationally, automethylation enhances its stability and antiretroviral activity. As to expression, highly expressed in kidney and testis.

The protein resides in the nucleus. The enzyme catalyses L-arginyl-[protein] + 2 S-adenosyl-L-methionine = N(omega),N(omega)-dimethyl-L-arginyl-[protein] + 2 S-adenosyl-L-homocysteine + 2 H(+). In terms of biological role, arginine methyltransferase that can catalyze the formation of both omega-N monomethylarginine (MMA) and asymmetrical dimethylarginine (aDMA), with a strong preference for the formation of aDMA. Preferentially methylates arginyl residues present in a glycine and arginine-rich domain and displays preference for monomethylated substrates. Specifically mediates the asymmetric dimethylation of histone H3 'Arg-2' to form H3R2me2a. H3R2me2a represents a specific tag for epigenetic transcriptional repression and is mutually exclusive with methylation on histone H3 'Lys-4' (H3K4me2 and H3K4me3). Acts as a transcriptional repressor of various genes such as HOXA2, THBS1 and TP53. Repression of TP53 blocks cellular senescence. Also methylates histone H2A and H4 'Arg-3' (H2AR3me and H4R3me, respectively). Acts as a regulator of DNA base excision during DNA repair by mediating the methylation of DNA polymerase beta (POLB), leading to the stimulation of its polymerase activity by enhancing DNA binding and processivity. Methylates HMGA1. Regulates alternative splicing events. Acts as a transcriptional coactivator of a number of steroid hormone receptors including ESR1, ESR2, PGR and NR3C1. Promotes fasting-induced transcriptional activation of the gluconeogenic program through methylation of the CRTC2 transcription coactivator. May play a role in innate immunity against HIV-1 in case of infection by methylating and impairing the function of various HIV-1 proteins such as Tat, Rev and Nucleocapsid protein p7 (NC). Methylates GPS2, protecting GPS2 from ubiquitination and degradation. Methylates SIRT7, inhibiting SIRT7 histone deacetylase activity and promoting mitochondria biogenesis. This chain is Protein arginine N-methyltransferase 6 (PRMT6), found in Homo sapiens (Human).